Consider the following 285-residue polypeptide: ATP phosphoribosyltransferase (285 aa).

The protein belongs to the ATP phosphoribosyltransferase family. Long subfamily. Mg(2+) serves as cofactor.

Its subcellular location is the cytoplasm. It catalyses the reaction 1-(5-phospho-beta-D-ribosyl)-ATP + diphosphate = 5-phospho-alpha-D-ribose 1-diphosphate + ATP. It participates in amino-acid biosynthesis; L-histidine biosynthesis; L-histidine from 5-phospho-alpha-D-ribose 1-diphosphate: step 1/9. Its activity is regulated as follows. Feedback inhibited by histidine. In terms of biological role, catalyzes the condensation of ATP and 5-phosphoribose 1-diphosphate to form N'-(5'-phosphoribosyl)-ATP (PR-ATP). Has a crucial role in the pathway because the rate of histidine biosynthesis seems to be controlled primarily by regulation of HisG enzymatic activity. The sequence is that of ATP phosphoribosyltransferase from Streptomyces avermitilis (strain ATCC 31267 / DSM 46492 / JCM 5070 / NBRC 14893 / NCIMB 12804 / NRRL 8165 / MA-4680).